The sequence spans 422 residues: UDP-N-acetylglucosamine 1-carboxyvinyltransferase (422 aa).

22 to 23 (KN) contacts phosphoenolpyruvate. Arginine 93 contacts UDP-N-acetyl-alpha-D-glucosamine. The active-site Proton donor is the cysteine 117. Position 117 is a 2-(S-cysteinyl)pyruvic acid O-phosphothioketal (cysteine 117). UDP-N-acetyl-alpha-D-glucosamine contacts are provided by residues 122 to 126 (RPVDL), aspartate 308, and leucine 330.

Belongs to the EPSP synthase family. MurA subfamily.

It localises to the cytoplasm. The enzyme catalyses phosphoenolpyruvate + UDP-N-acetyl-alpha-D-glucosamine = UDP-N-acetyl-3-O-(1-carboxyvinyl)-alpha-D-glucosamine + phosphate. Its pathway is cell wall biogenesis; peptidoglycan biosynthesis. Functionally, cell wall formation. Adds enolpyruvyl to UDP-N-acetylglucosamine. The sequence is that of UDP-N-acetylglucosamine 1-carboxyvinyltransferase from Helicobacter pylori (strain Shi470).